The primary structure comprises 192 residues: MEQLNICIDIDGTITDAYYWIDLCNSYFKTSITEKDATQYYIHKILNVPLEEYNEFYEKYKYKLHSEQKLRKDVKSVITKLSQNNNIFFVTARERDLTILTYSYLRKKEIPYDSLFILGTHHKVPTARQLNCDLFIEDNYDNALELSKAGFKVLLIDTYYNRKPLNQNIIRFYNWDEVYGIVDRLFEKSEAI.

It belongs to the 5'(3')-deoxyribonucleotidase family. Mg(2+) serves as cofactor.

The catalysed reaction is sugar phosphate + H2O = sugar + phosphate.. Catalyzes the dephosphorylation of nucleotide monophosphates and of different sugar phosphates in vitro. The protein is Nucleotidase CA_C3379 of Clostridium acetobutylicum (strain ATCC 824 / DSM 792 / JCM 1419 / IAM 19013 / LMG 5710 / NBRC 13948 / NRRL B-527 / VKM B-1787 / 2291 / W).